The primary structure comprises 236 residues: Phosphoribosylaminoimidazole-succinocarboxamide synthase (236 aa).

The protein belongs to the SAICAR synthetase family.

The catalysed reaction is 5-amino-1-(5-phospho-D-ribosyl)imidazole-4-carboxylate + L-aspartate + ATP = (2S)-2-[5-amino-1-(5-phospho-beta-D-ribosyl)imidazole-4-carboxamido]succinate + ADP + phosphate + 2 H(+). Its pathway is purine metabolism; IMP biosynthesis via de novo pathway; 5-amino-1-(5-phospho-D-ribosyl)imidazole-4-carboxamide from 5-amino-1-(5-phospho-D-ribosyl)imidazole-4-carboxylate: step 1/2. In Rickettsia felis (strain ATCC VR-1525 / URRWXCal2) (Rickettsia azadi), this protein is Phosphoribosylaminoimidazole-succinocarboxamide synthase.